The sequence spans 552 residues: Putative phosphate permease MT2339 (552 aa).

A run of 13 helical transmembrane segments spans residues 38–58 (WHLS…WWAF), 69–89 (ILVL…GNDV), 107–127 (ALLV…GDVT), 146–166 (DFMN…LFAN), 178–198 (IIGG…QGGA), 213–233 (VSWV…YGVI), 326–346 (VPLV…FKGF), 360–380 (FIIA…AKTL), 389–409 (TFLM…FSHG), 437–457 (AVPA…LWFI), 472–492 (MHPA…MGAT), 493–513 (VLGL…GVGI), and 526–546 (IVLA…VGLV).

It belongs to the inorganic phosphate transporter (PiT) (TC 2.A.20) family.

It is found in the cell membrane. Potential transporter for phosphate. This is Putative phosphate permease MT2339 from Mycobacterium tuberculosis (strain CDC 1551 / Oshkosh).